The sequence spans 205 residues: Large ribosomal subunit protein uL4 (205 aa).

The tract at residues 47–70 (TRAQKSRAEVSGGGKKPFRQKGTG) is disordered.

Belongs to the universal ribosomal protein uL4 family. In terms of assembly, part of the 50S ribosomal subunit.

In terms of biological role, one of the primary rRNA binding proteins, this protein initially binds near the 5'-end of the 23S rRNA. It is important during the early stages of 50S assembly. It makes multiple contacts with different domains of the 23S rRNA in the assembled 50S subunit and ribosome. Forms part of the polypeptide exit tunnel. The chain is Large ribosomal subunit protein uL4 from Acinetobacter baylyi (strain ATCC 33305 / BD413 / ADP1).